The chain runs to 232 residues: Phosphatidylserine decarboxylase proenzyme (232 aa).

Residue Ser-190 is the Schiff-base intermediate with substrate; via pyruvic acid of the active site. Ser-190 bears the Pyruvic acid (Ser); by autocatalysis mark.

Belongs to the phosphatidylserine decarboxylase family. PSD-A subfamily. Heterodimer of a large membrane-associated beta subunit and a small pyruvoyl-containing alpha subunit. It depends on pyruvate as a cofactor. In terms of processing, is synthesized initially as an inactive proenzyme. Formation of the active enzyme involves a self-maturation process in which the active site pyruvoyl group is generated from an internal serine residue via an autocatalytic post-translational modification. Two non-identical subunits are generated from the proenzyme in this reaction, and the pyruvate is formed at the N-terminus of the alpha chain, which is derived from the carboxyl end of the proenzyme. The post-translation cleavage follows an unusual pathway, termed non-hydrolytic serinolysis, in which the side chain hydroxyl group of the serine supplies its oxygen atom to form the C-terminus of the beta chain, while the remainder of the serine residue undergoes an oxidative deamination to produce ammonia and the pyruvoyl prosthetic group on the alpha chain.

The protein resides in the cell membrane. It catalyses the reaction a 1,2-diacyl-sn-glycero-3-phospho-L-serine + H(+) = a 1,2-diacyl-sn-glycero-3-phosphoethanolamine + CO2. It participates in phospholipid metabolism; phosphatidylethanolamine biosynthesis; phosphatidylethanolamine from CDP-diacylglycerol: step 2/2. Functionally, catalyzes the formation of phosphatidylethanolamine (PtdEtn) from phosphatidylserine (PtdSer). This chain is Phosphatidylserine decarboxylase proenzyme, found in Cereibacter sphaeroides (strain KD131 / KCTC 12085) (Rhodobacter sphaeroides).